A 146-amino-acid chain; its full sequence is Probable gamma-secretase subunit PEN-2 (146 aa).

A disordered region spans residues 1–26 (MEATRSDDPSLNPIRNRNPNPNPNPN). The Lumenal portion of the chain corresponds to 1–61 (MEATRSDDPS…SVDYARRFYK (61 aa)). Residues 9–19 (PSLNPIRNRNP) are compositionally biased toward low complexity. The chain crosses the membrane as a helical span at residues 62–82 (FGFALLPWLWFVNCFYFWPVL). The Cytoplasmic segment spans residues 83-98 (RHSRAFPQIRNYVVRS). Residues 99–119 (AIGFSVFTALLSAWALTFSIG) traverse the membrane as a helical segment. At 120 to 146 (GEQLFGPLYDKLVMYNVADRLGLSGLA) the chain is on the lumenal side.

Belongs to the PEN-2 family. In terms of assembly, probable component of the gamma-secretase complex, a complex composed of a presenilin homodimer, nicastrin, APH1 and PEN2.

It localises to the membrane. Probable subunit of the gamma-secretase complex, an endoprotease complex that catalyzes the intramembrane cleavage of integral membrane proteins such as Notch receptors. This is Probable gamma-secretase subunit PEN-2 from Arabidopsis thaliana (Mouse-ear cress).